The following is a 224-amino-acid chain: 7-cyano-7-deazaguanine synthase (224 aa).

10 to 20 (LSGGLDSATVV) serves as a coordination point for ATP. The Zn(2+) site is built by Cys189, Cys199, Cys202, and Cys205.

This sequence belongs to the QueC family. Zn(2+) is required as a cofactor.

It carries out the reaction 7-carboxy-7-deazaguanine + NH4(+) + ATP = 7-cyano-7-deazaguanine + ADP + phosphate + H2O + H(+). Its pathway is purine metabolism; 7-cyano-7-deazaguanine biosynthesis. Functionally, catalyzes the ATP-dependent conversion of 7-carboxy-7-deazaguanine (CDG) to 7-cyano-7-deazaguanine (preQ(0)). In Pseudomonas paraeruginosa (strain DSM 24068 / PA7) (Pseudomonas aeruginosa (strain PA7)), this protein is 7-cyano-7-deazaguanine synthase.